A 251-amino-acid chain; its full sequence is Probable phosphatase Sama_2233 (251 aa).

Residues histidine 8, histidine 10, histidine 16, histidine 41, glutamate 74, histidine 102, histidine 132, aspartate 193, and histidine 195 each contribute to the Zn(2+) site.

It belongs to the PHP family. Zn(2+) serves as cofactor.

The protein is Probable phosphatase Sama_2233 of Shewanella amazonensis (strain ATCC BAA-1098 / SB2B).